Here is a 577-residue protein sequence, read N- to C-terminus: F-box/TPR repeat protein pof3 (577 aa).

TPR repeat units follow at residues 6 to 39 (VKAI…EPNP), 41 to 74 (IDLF…NARN), and 76 to 108 (RGYL…VHKM). Residues 138 to 180 (ILPREVLLCILQQLNFKSIVQCMQVCKHWRDCIKKEPSLFCCL) form the F-box domain.

As to quaternary structure, a part of the E3 ubiquitin ligase Skp1-Cullin-1-F-box (SCF) complex. Interacts with cul1, mcl1 and skp1.

It localises to the mitochondrion. Its subcellular location is the nucleus. Has a role in substrate recognition in the Skp1-Cullin-1/Cdc53-F-box (SCF) ubiquitin ligase complex. Required for the maintenance of telomere length and transcriptional silencing at the telomere. Also required for chromosome segregation. The polypeptide is F-box/TPR repeat protein pof3 (pof3) (Schizosaccharomyces pombe (strain 972 / ATCC 24843) (Fission yeast)).